The chain runs to 265 residues: Mlc titration factor A (265 aa).

Positions 111, 148, 152, and 211 each coordinate Zn(2+).

It belongs to the MtfA family. In terms of assembly, interacts with Mlc. Zn(2+) serves as cofactor.

It localises to the cytoplasm. In terms of biological role, involved in the modulation of the activity of the glucose-phosphotransferase system (glucose-PTS). Interacts with the transcriptional repressor Mlc, preventing its interaction with DNA and leading to the modulation of expression of genes regulated by Mlc, including ptsG, which encodes the PTS system glucose-specific EIICB component. Functionally, shows zinc-dependent metallopeptidase activity. This chain is Mlc titration factor A, found in Salmonella choleraesuis (strain SC-B67).